We begin with the raw amino-acid sequence, 191 residues long: MRLTDRRRPATDYRCRVPETSASDLVRSLLLTVPDFPQPGILFRDLTPVLADGAGLRAVVDNLVAAGGPVDAVAGVEARGFLLAAAAAYASGVGTLAVRKAGKLPGEVLRETYALEYGEAAIELHPGQLAPGSRVLLLDDVLATGGTLEAAARLLERAGYEVAGIGVVLELADLGGRARLAGHDVHAILSL.

This sequence belongs to the purine/pyrimidine phosphoribosyltransferase family. As to quaternary structure, homodimer.

The protein resides in the cytoplasm. It carries out the reaction AMP + diphosphate = 5-phospho-alpha-D-ribose 1-diphosphate + adenine. Its pathway is purine metabolism; AMP biosynthesis via salvage pathway; AMP from adenine: step 1/1. Functionally, catalyzes a salvage reaction resulting in the formation of AMP, that is energically less costly than de novo synthesis. The protein is Adenine phosphoribosyltransferase of Clavibacter sepedonicus (Clavibacter michiganensis subsp. sepedonicus).